We begin with the raw amino-acid sequence, 431 residues long: ETS domain-containing protein Elk-4 (431 aa).

Residues 5–85 (ITLWQFLLQL…NGQKFVYKFV (81 aa)) constitute a DNA-binding region (ETS). The segment at 114–139 (SSSSKDVENGGKDKPPQPGAKTSSRN) is disordered. The span at 118 to 128 (KDVENGGKDKP) shows a compositional bias: basic and acidic residues. A Glycyl lysine isopeptide (Lys-Gly) (interchain with G-Cter in SUMO2) cross-link involves residue Lys-167. A Phosphoserine modification is found at Ser-180. Disordered regions lie at residues 251–282 (TTPP…DTDI), 294–323 (ENLS…KKPK), and 411–431 (TLSG…LQKT). Over residues 261-273 (LQEPPRTPSPPLS) the composition is skewed to pro residues. A compositionally biased stretch (basic and acidic residues) spans 299-313 (EPKDQDSVLLEKDKV).

It belongs to the ETS family. As to quaternary structure, interacts with SIRT7.

It localises to the nucleus. Involved in both transcriptional activation and repression. Interaction with SIRT7 leads to recruitment and stabilization of SIRT7 at promoters, followed by deacetylation of histone H3 at 'Lys-18' (H3K18Ac) and subsequent transcription repression. Forms a ternary complex with the serum response factor (SRF). Requires DNA-bound SRF for ternary complex formation and makes extensive DNA contacts to the 5'side of SRF, but does not bind DNA autonomously. The chain is ETS domain-containing protein Elk-4 (ELK4) from Homo sapiens (Human).